The following is a 323-amino-acid chain: Malate dehydrogenase (323 aa).

NAD(+)-binding positions include 20-25 (GAGRVG) and Asp-44. Residues Arg-93 and Arg-99 each contribute to the substrate site. Residues Asn-106 and 129 to 131 (VTN) contribute to the NAD(+) site. Substrate contacts are provided by Asn-131 and Arg-162. Catalysis depends on His-186, which acts as the Proton acceptor.

It belongs to the LDH/MDH superfamily. MDH type 3 family.

It carries out the reaction (S)-malate + NAD(+) = oxaloacetate + NADH + H(+). Catalyzes the reversible oxidation of malate to oxaloacetate. The chain is Malate dehydrogenase from Nostoc sp. (strain PCC 7120 / SAG 25.82 / UTEX 2576).